Consider the following 191-residue polypeptide: C-type lectin domain family 2 member D (191 aa).

The Cytoplasmic segment spans residues 1–38 (MHDSNNVEKDITPSELPANPGCLHSKEHSIKATLIWRL). A helical; Signal-anchor for type II membrane protein transmembrane segment spans residues 39-59 (FFLIMFLTIIVCGMVAALSAI). Residues 60-191 (RANCHQEPSV…WICSKSDIHV (132 aa)) are Extracellular-facing. A disulfide bridge links Cys75 with Cys86. A C-type lectin domain is found at 82–185 (FQRKCFYFSD…HYTERKWICS (104 aa)). N-linked (GlcNAc...) asparagine glycosylation is found at Asn95 and Asn147. An intrachain disulfide couples Cys103 to Cys184.

In terms of assembly, homodimer; disulfide-linked. In terms of processing, N-glycosylated. As to expression, detected in peripheral blood leukocytes, osteoblasts, lymph node, thymus and spleen. Isoform 1, isoform 2 and isoform 4 are expressed in T- and B-lymphocytes, and at lower levels in NK cells. They are also expressed in B-cell lines and LPS-matured monocyte-derived dendritic cells.

Its subcellular location is the cell membrane. It localises to the endoplasmic reticulum. Its function is as follows. Receptor for KLRB1 that protects target cells against natural killer cell-mediated lysis. Inhibits osteoclast formation. Inhibits bone resorption. Modulates the release of interferon-gamma. Binds high molecular weight sulfated glycosaminoglycans. The protein is C-type lectin domain family 2 member D (CLEC2D) of Homo sapiens (Human).